The following is a 170-amino-acid chain: Cyclic pyranopterin monophosphate synthase (170 aa).

The interval 1–25 (MADPSTLTHPDPEGGVRMMDASQKS) is disordered. Substrate is bound by residues 78–80 (LCH) and 116–117 (ME). Asp131 is an active-site residue.

The protein belongs to the MoaC family. Homohexamer; trimer of dimers.

It carries out the reaction (8S)-3',8-cyclo-7,8-dihydroguanosine 5'-triphosphate = cyclic pyranopterin phosphate + diphosphate. It participates in cofactor biosynthesis; molybdopterin biosynthesis. Catalyzes the conversion of (8S)-3',8-cyclo-7,8-dihydroguanosine 5'-triphosphate to cyclic pyranopterin monophosphate (cPMP). This Salinibacter ruber (strain DSM 13855 / M31) protein is Cyclic pyranopterin monophosphate synthase.